The sequence spans 366 residues: Histidinol-phosphate aminotransferase 2 (366 aa).

Over residues 1-11 (MQVKDQLSSLQ) the composition is skewed to polar residues. Residues 1–21 (MQVKDQLSSLQPYKPGKSPEQ) form a disordered region. An N6-(pyridoxal phosphate)lysine modification is found at K222.

It belongs to the class-II pyridoxal-phosphate-dependent aminotransferase family. Histidinol-phosphate aminotransferase subfamily. As to quaternary structure, homodimer. Requires pyridoxal 5'-phosphate as cofactor.

It carries out the reaction L-histidinol phosphate + 2-oxoglutarate = 3-(imidazol-4-yl)-2-oxopropyl phosphate + L-glutamate. The protein operates within amino-acid biosynthesis; L-histidine biosynthesis; L-histidine from 5-phospho-alpha-D-ribose 1-diphosphate: step 7/9. In Bacillus thuringiensis subsp. konkukian (strain 97-27), this protein is Histidinol-phosphate aminotransferase 2.